A 179-amino-acid polypeptide reads, in one-letter code: Inorganic pyrophosphatase (179 aa).

Residues Lys30, Arg44, and Tyr56 each coordinate substrate. Residues Asp66, Asp71, and Asp103 each contribute to the Mg(2+) site. Tyr143 lines the substrate pocket.

Belongs to the PPase family. In terms of assembly, homohexamer. The cofactor is Mg(2+).

The protein resides in the cytoplasm. It catalyses the reaction diphosphate + H2O = 2 phosphate + H(+). Catalyzes the hydrolysis of inorganic pyrophosphate (PPi) forming two phosphate ions. This is Inorganic pyrophosphatase from Wigglesworthia glossinidia brevipalpis.